Consider the following 577-residue polypeptide: Alpha-1,2-mannosyltransferase alg9 (577 aa).

The first 29 residues, 1-29 (MPSKAPRKSLSVSFVWTFSILAVLRLTSA), serve as a signal peptide directing secretion. The Extracellular portion of the chain corresponds to 30 to 68 (SFRVIDDCDEVYNYWEPLHYLLYGYGLQTWEYSPEYAIR). The helical transmembrane segment at 69–89 (SWFYIALHAVPGFLARGLGLS) threads the bilayer. At 90–95 (RLHVFY) the chain is on the cytoplasmic side. The chain crosses the membrane as a helical span at residues 96–116 (FIRGVLACFSAFCETNLILAV). Residues 117–136 (ARNFNRAVALHLTSVLFVNS) are Extracellular-facing. A helical transmembrane segment spans residues 137–159 (GMWSASTSFLPSSFAMNMVTLAL). Over 160–176 (SAQLSPPSTKRTVKVVS) the chain is Cytoplasmic. A helical membrane pass occupies residues 177 to 197 (FITIGAVIGWPFSAALSIPFI). The Extracellular portion of the chain corresponds to 198–217 (LLELVDLKGRFRHLFCRWFK). Residues 218–238 (AIFVALLITGICITVDSLFYH) form a helical membrane-spanning segment. The Cytoplasmic segment spans residues 239 to 280 (RIQFVAWNIVKYNVLAKDGRGPDIYGTEPWWYYFANLSLQHN). The chain crosses the membrane as a helical span at residues 281–301 (IVLWFAMACGPLVLLAAFTNW). The Extracellular segment spans residues 302-305 (INLD). The chain crosses the membrane as a helical span at residues 306-326 (SFLDLSSVISPFYIWLFIFII). The Cytoplasmic segment spans residues 327–333 (QPHKEER). The chain crosses the membrane as a helical span at residues 334–354 (FMYPIYPVLCLAAAIGLDMSL). Over 355–375 (KLMIQILSSINETVRSKFPVR) the chain is Extracellular. Residues 376-396 (FVVLCVYAIIGCLSIARILAI) form a helical membrane-spanning segment. Residues 397-577 (QNYNAPMIIY…NLRRASKQQA (181 aa)) lie on the Cytoplasmic side of the membrane.

The protein belongs to the glycosyltransferase 22 family.

The protein localises to the endoplasmic reticulum membrane. The enzyme catalyses an alpha-D-Man-(1-&gt;2)-alpha-D-Man-(1-&gt;2)-alpha-D-Man-(1-&gt;3)-[alpha-D-Man-(1-&gt;3)-alpha-D-Man-(1-&gt;6)]-beta-D-Man-(1-&gt;4)-beta-D-GlcNAc-(1-&gt;4)-alpha-D-GlcNAc-diphospho-di-trans,poly-cis-dolichol + a di-trans,poly-cis-dolichyl beta-D-mannosyl phosphate = an alpha-D-Man-(1-&gt;2)-alpha-D-Man-(1-&gt;2)-alpha-D-Man-(1-&gt;3)-[alpha-D-Man-(1-&gt;2)-alpha-D-Man-(1-&gt;3)-alpha-D-Man-(1-&gt;6)]-beta-D-Man-(1-&gt;4)-beta-D-GlcNAc-(1-&gt;4)-alpha-D-GlcNAc-diphospho-di-trans,poly-cis-dolichol + a di-trans,poly-cis-dolichyl phosphate + H(+). It catalyses the reaction an alpha-D-Man-(1-&gt;2)-alpha-D-Man-(1-&gt;2)-alpha-D-Man-(1-&gt;3)-[alpha-D-Man-(1-&gt;2)-alpha-D-Man-(1-&gt;3)-[alpha-D-Man-(1-&gt;6)]-alpha-D-Man-(1-&gt;6)]-beta-D-Man-(1-&gt;4)-beta-D-GlcNAc-(1-&gt;4)-alpha-D-GlcNAc-diphospho-di-trans,poly-cis-dolichol + a di-trans,poly-cis-dolichyl beta-D-mannosyl phosphate = an alpha-D-Man-(1-&gt;2)-alpha-D-Man-(1-&gt;2)-alpha-D-Man-(1-&gt;3)-[alpha-D-Man-(1-&gt;2)-alpha-D-Man-(1-&gt;3)-[alpha-D-Man-(1-&gt;2)-alpha-D-Man-(1-&gt;6)]-alpha-D-Man-(1-&gt;6)]-beta-D-Man-(1-&gt;4)-beta-D-GlcNAc-(1-&gt;4)-alpha-D-GlcNAc-diphospho-di-trans,poly-cis-dolichol + a di-trans,poly-cis-dolichyl phosphate + H(+). The protein operates within protein modification; protein glycosylation. Its function is as follows. Catalyzes the transfer of mannose from Dol-P-Man to lipid-linked oligosaccharides. This Schizosaccharomyces pombe (strain 972 / ATCC 24843) (Fission yeast) protein is Alpha-1,2-mannosyltransferase alg9 (alg9).